The primary structure comprises 354 residues: Transcription termination factor 3, mitochondrial (354 aa).

The transit peptide at 1-89 (MFCSALRNIL…SFNLAAYVNN (89 aa)) directs the protein to the mitochondrion.

It belongs to the mTERF family.

Its subcellular location is the mitochondrion. Binds promoter DNA and regulates initiation of transcription. Regulator of mitochondrial ribosome biogenesis and translation that is essential for development. Required for normal mitochondrial transcription and translation. Required for assembly of mitochondrial respiratory complexes and normal mitochondrial function. Maintains 16S rRNA levels and functions in mitochondrial ribosome assembly by regulating the biogenesis of the 39S ribosomal subunit. The polypeptide is Transcription termination factor 3, mitochondrial (Drosophila melanogaster (Fruit fly)).